A 470-amino-acid chain; its full sequence is Pheromone a factor receptor (470 aa).

Topologically, residues 1–5 (MSYKS) are extracellular. The helical transmembrane segment at 6–23 (AIIGLCLLAVILLAPPLA) threads the bilayer. Residues 24-29 (WHSHTK) lie on the Cytoplasmic side of the membrane. A helical transmembrane segment spans residues 30-53 (NIPAIILITWLLTMNLTCIVDAAI). Residues 54–70 (WSDDDFLTRWDGKGWCD) lie on the Extracellular side of the membrane. Residues 71 to 98 (IVIKLQVGANIGISCAVTNIIYNLHTIL) form a helical membrane-spanning segment. Over 99–116 (KADSVLPDLSSWTKIVKD) the chain is Cytoplasmic. The chain crosses the membrane as a helical span at residues 117–134 (LVISLFTPVMVMGFSYLL). Residues 135–155 (QVFRYGIARYNGCQNLLSPTW) are Extracellular-facing. Residues 156-183 (ITTVLYTMWMLIWSFVGAVYATLVLFVF) traverse the membrane as a helical segment. Residues 184 to 205 (YKKRKDVRDILHCTNSGLNLTR) are Cytoplasmic-facing. Residues 206 to 228 (FARLLIFCFIIILVMFPFSVYTF) form a helical membrane-spanning segment. The Extracellular segment spans residues 229-266 (VQDLQQVEGHYTFKNTHSSTIWNTIIKFDPGRPIYNIW). The chain crosses the membrane as a helical span at residues 267–285 (LYVLMSYLVFLIFGLGSDA). Residues 286 to 470 (LHMYSKFLRS…EHSSENTAGP (185 aa)) are Cytoplasmic-facing. The segment at 300–470 (FVLDMWKRFI…EHSSENTAGP (171 aa)) is hydrophilic. Residues 440-470 (NFEGESLCYSPASKEENSSSNEHSSENTAGP) are disordered.

This sequence belongs to the G-protein coupled receptor 4 family.

It localises to the membrane. Its function is as follows. Receptor for the peptide pheromone a factor. The sequence is that of Pheromone a factor receptor (STE3) from Saccharomyces cerevisiae (strain ATCC 204508 / S288c) (Baker's yeast).